A 432-amino-acid chain; its full sequence is 3-phosphoshikimate 1-carboxyvinyltransferase (432 aa).

3-phosphoshikimate is bound by residues Lys22, Ser23, and Arg27. Lys22 lines the phosphoenolpyruvate pocket. Residues Gly96 and Arg127 each coordinate phosphoenolpyruvate. 3-phosphoshikimate contacts are provided by Ser173, Ser174, Gln175, Ser201, Asp316, Asn339, and Lys343. Gln175 is a binding site for phosphoenolpyruvate. Asp316 (proton acceptor) is an active-site residue. Residues Arg347, Arg391, and Lys416 each coordinate phosphoenolpyruvate.

It belongs to the EPSP synthase family. Monomer.

It is found in the cytoplasm. The catalysed reaction is 3-phosphoshikimate + phosphoenolpyruvate = 5-O-(1-carboxyvinyl)-3-phosphoshikimate + phosphate. Its pathway is metabolic intermediate biosynthesis; chorismate biosynthesis; chorismate from D-erythrose 4-phosphate and phosphoenolpyruvate: step 6/7. Its function is as follows. Catalyzes the transfer of the enolpyruvyl moiety of phosphoenolpyruvate (PEP) to the 5-hydroxyl of shikimate-3-phosphate (S3P) to produce enolpyruvyl shikimate-3-phosphate and inorganic phosphate. The polypeptide is 3-phosphoshikimate 1-carboxyvinyltransferase (Haemophilus influenzae (strain 86-028NP)).